The chain runs to 544 residues: uncharacterized protein (544 aa).

This is an uncharacterized protein from Acanthamoeba polyphaga mimivirus (APMV).